The following is a 423-amino-acid chain: F-box/LRR-repeat protein 2 (423 aa).

The F-box domain occupies 9 to 55 (GLINKKLPKELLLRIFSFLDIVTLCRCAQISKAWNILALDGSNWQRV). LRR repeat units lie at residues 61–87 (QTDVEGRVVENISKRCGGFLRKLSLRG), 88–113 (CIGVGDSSLKTFAQNCRNIEHLNLNG), 114–139 (CTKITDSTCYSLSRFCSKLKHLDLTS), 140–165 (CVSVTNSSLKGISEGCRNLEYLNLSW), 166–191 (CDQITKEGIEALVRGCRGLKALLLRG), 192–217 (CTQLEDEALKHIQNHCHELVSLNLQS), 218–243 (CSRITDDGVVQICRGCHRLQALCLSG), 244–269 (CSNLTDASLTALGLNCPRLQVLEAAR), 270–295 (CSHLTDAGFTLLARNCHELEKMDLEE), 296–321 (CVLITDSTLVQLSIHCPKLQALSLSH), 322–350 (CELITDEGILHLSSSTCGHERLRVLELDN), 351–375 (CLLVTDASLEHLENCRGLERLELYD), and 376–401 (CQQVTRAGIKRMRAQLPHVKVHAYFA). The tract at residues 80–90 (LRKLSLRGCIG) is interaction with Calmodulin. Lys201 participates in a covalent cross-link: Glycyl lysine isopeptide (Lys-Gly) (interchain with G-Cter in ubiquitin). Thr404 bears the Phosphothreonine; by GSK3-beta mark. Cys420 carries the S-geranylgeranyl cysteine lipid modification. Positions 420-423 (CVIL) match the CAAX motif motif.

In terms of assembly, part of the SCF (SKP1-CUL1-F-box) E3 ubiquitin-protein ligase complex SCF(FBXL2) composed of CUL1, SKP1, RBX1 and FBXL2. Interacts with calmodulin; may antagonize substrate ubiquitination by SCF(FBXL2). May interact with PIK3R1. Interacts with PTPN13. In terms of processing, phosphorylated by GSK-beta (GSK3B), promoting recognition by FBXO3, leading to its ubiquitination by the SCF(FBXO3) complex. Post-translationally, ubiquitinated at Lys-201 by the SCF(FBXO3) complex in response to lipopolysaccharide (LPS), leading to its degradation by the proteasome.

It localises to the membrane. Its pathway is protein modification; protein ubiquitination. Functionally, calcium-activated substrate recognition component of the SCF (SKP1-cullin-F-box protein) E3 ubiquitin-protein ligase complex, SCF(FBXL2), which mediates the ubiquitination and subsequent proteasomal degradation of target proteins. Unlike many F-box proteins, FBXL2 does not seem to target phosphodegron within its substrates but rather calmodulin-binding motifs and is thereby antagonized by calmodulin. This is the case for the cyclins CCND2 and CCND3 which polyubiquitination and subsequent degradation are inhibited by calmodulin. Through CCND2 and CCND3 degradation induces cell-cycle arrest in G(0). SCF(FBXL2) also mediates PIK3R2 ubiquitination and proteasomal degradation thereby regulating phosphatidylinositol 3-kinase signaling and autophagy. PCYT1A monoubiquitination by SCF(FBXL2) and subsequent degradation regulates synthesis of phosphatidylcholine, which is utilized for formation of membranes and of pulmonary surfactant. The SCF(FBXL2) complex acts as a regulator of inflammation by mediating ubiquitination and degradation of TRAF proteins (TRAF1, TRAF2, TRAF3, TRAF4, TRAF5 and TRAF6). The SCF(FBXL2) complex acts as a negative regulator of the NLRP3 inflammasome by mediating ubiquitination and degradation of NLRP3. The sequence is that of F-box/LRR-repeat protein 2 from Mus musculus (Mouse).